The following is a 93-amino-acid chain: Long neurotoxin 1 (93 aa).

The first 21 residues, 1–21, serve as a signal peptide directing secretion; sequence MKTLLLTLVVVTIVCLDLGNS. 5 cysteine pairs are disulfide-bonded: C24–C42, C35–C63, C48–C52, C67–C78, and C79–C84.

This sequence belongs to the three-finger toxin family. Long-chain subfamily. Type II alpha-neurotoxin sub-subfamily. Expressed by the venom gland.

The protein localises to the secreted. Its function is as follows. Binds with high affinity to muscular (alpha-1/CHRNA1) and neuronal (alpha-7/CHRNA7) nicotinic acetylcholine receptor (nAChR) and inhibits acetylcholine from binding to the receptor, thereby impairing neuromuscular and neuronal transmission. The protein is Long neurotoxin 1 of Tropidechis carinatus (Australian rough-scaled snake).